The sequence spans 635 residues: MATAEAQIGVNRNLQKQDLSNLDVSKLTPLSPEVISRQATINIGTIGHVAHGKSTVVKAISGVQTVRFKNELERNITIKLERLSEKKIKNLLTSKQQRQQYEIKQRSMLRHLAELRRHSRFRRLCTKPASSSMPASTSSVDRRTTRRSTSQTSLSPSNSSGYGSVFGCEEHDVDKIPSLNGFAKLKRRRSSCVGAPTPNSKRSKNNMGVIAKRPPKGEYVVERIECVEMDQYQPVFFVKWLGYHDSENTWESLANVADCAEMEKFVERHQQLYETYIAKITTELEKQLEALPLMENITVAEVDAYEPLNLQIDLILLAQYRAAGSRSQREPQKIGERALKSMQIKRAQFVRRKQLADLALFEKRMNHVEKPSPPIRVENNIDLDTIDSNFMYIHDNIIGKDVPKPEAGIVGCKCTEDTEECTASTKCCARFAGELFAYERSTRRLRLRPGSAIYECNSRCSCDSSCSNRLVQHGRQVPLVLFKTANGSGWGVRAATALRKGEFVCEYIGEIITSDEANERGKAYDDNGRTYLFDLDYNTAQDSEYTIDAANYGNISHFINHSCDPNLAVFPCWIEHLNVALPHLVFFTLRPIKAGEELSFDYIRADNEDVPYENLSTAVRVECRCGRDNCRKVLF.

The tract at residues 81–188 (ERLSEKKIKN…LNGFAKLKRR (108 aa)) is binds to Su(var)205 and Suvar(3)7. Disordered regions lie at residues 123 to 161 (RLCT…NSSG) and 191 to 210 (SCVG…MGVI). 2 stretches are compositionally biased toward low complexity: residues 128–139 (PASSSMPASTSS) and 147–161 (RSTS…NSSG). A Chromo domain is found at 219–278 (YVVERIECVEMDQYQPVFFVKWLGYHDSENTWESLANVADCAEMEKFVERHQQLYETYIA). A Pre-SET domain is found at 410–474 (VGCKCTEDTE…SCSNRLVQHG (65 aa)). Positions 412, 414, 421, 427, 428, 456, 460, 462, and 466 each coordinate Zn(2+). An SET domain is found at 477–603 (VPLVLFKTAN…AGEELSFDYI (127 aa)). S-adenosyl-L-methionine-binding positions include 488–490 (SGW), Tyr-531, and 560–561 (NH). Zn(2+)-binding residues include Cys-563, Cys-623, Cys-625, and Cys-630. Positions 619–635 (VRVECRCGRDNCRKVLF) constitute a Post-SET domain.

Belongs to the class V-like SAM-binding methyltransferase superfamily. Histone-lysine methyltransferase family. Suvar3-9 subfamily. As to quaternary structure, interacts with Su(var)205 and Su(var)3-7. Probably associates with HDAC1/Rpd3. Interacts with Rrp6; the interaction promotes association of Rrp6 with a subset of genomic loci.

It is found in the nucleus. It localises to the chromosome. The protein resides in the centromere. The enzyme catalyses L-lysyl(9)-[histone H3] + 3 S-adenosyl-L-methionine = N(6),N(6),N(6)-trimethyl-L-lysyl(9)-[histone H3] + 3 S-adenosyl-L-homocysteine + 3 H(+). Functionally, histone methyltransferase that specifically trimethylates 'Lys-9' of histone H3 using monomethylated H3 'Lys-9' as substrate. H3 'Lys-9' trimethylation represents a specific tag for epigenetic transcriptional repression by recruiting Su(var)205/HP1 to methylated histones. Mainly functions in heterochromatin regions, thereby playing a central role in the establishment of constitutive heterochromatin at pericentric regions. Involved in heterochromatic gene silencing including the modification of position-effect-variegation. The polypeptide is Histone-lysine N-methyltransferase Su(var)3-9 (Su(var)3-9) (Drosophila melanogaster (Fruit fly)).